Here is a 735-residue protein sequence, read N- to C-terminus: Photosystem I P700 chlorophyll a apoprotein A2 (735 aa).

8 helical membrane-spanning segments follow: residues 47 to 70 (IFASHFGQLAIIFLWTSGNLFHVA), 136 to 159 (LYIGSIFLSFAATAFLFAGWLHLQ), 176 to 200 (LNHHLSGLFGVSSLAWTGHLIHVAI), 274 to 292 (MAHHHLAIAVLFIVAGHMY), 331 to 354 (LHFQLGLALASVGTICSLVAQHMY), 370 to 396 (ASLYTHHQYIAGFILCGAFAHGAIFFI), 418 to 440 (AIISHLSWVSLFLGFHTLGLYVH), and 518 to 536 (FLVHHAIALGLHTTTLILV). Cys560 and Cys569 together coordinate [4Fe-4S] cluster. 2 consecutive transmembrane segments (helical) span residues 576 to 597 (AFYLAVFWMLNTIGWVTFYFHW) and 644 to 666 (LSVWSWMFLFGHLIYATGFMFLI). Chlorophyll a contacts are provided by His655, Met663, and Tyr671. A phylloquinone-binding site is contributed by Trp672. Residues 708 to 728 (VVGLAHFSAGYILTYAAFLIA) form a helical membrane-spanning segment.

This sequence belongs to the PsaA/PsaB family. In terms of assembly, the PsaA/B heterodimer binds the P700 chlorophyll special pair and subsequent electron acceptors. PSI consists of a core antenna complex that captures photons, and an electron transfer chain that converts photonic excitation into a charge separation. The eukaryotic PSI reaction center is composed of at least 11 subunits. The cofactor is P700 is a chlorophyll a/chlorophyll a' dimer, A0 is one or more chlorophyll a, A1 is one or both phylloquinones and FX is a shared 4Fe-4S iron-sulfur center..

It is found in the plastid. The protein resides in the chloroplast thylakoid membrane. It carries out the reaction reduced [plastocyanin] + hnu + oxidized [2Fe-2S]-[ferredoxin] = oxidized [plastocyanin] + reduced [2Fe-2S]-[ferredoxin]. PsaA and PsaB bind P700, the primary electron donor of photosystem I (PSI), as well as the electron acceptors A0, A1 and FX. PSI is a plastocyanin/cytochrome c6-ferredoxin oxidoreductase, converting photonic excitation into a charge separation, which transfers an electron from the donor P700 chlorophyll pair to the spectroscopically characterized acceptors A0, A1, FX, FA and FB in turn. Oxidized P700 is reduced on the lumenal side of the thylakoid membrane by plastocyanin or cytochrome c6. The chain is Photosystem I P700 chlorophyll a apoprotein A2 from Tupiella akineta (Green alga).